Consider the following 758-residue polypeptide: 5-methyltetrahydropteroyltriglutamate--homocysteine methyltransferase (758 aa).

5-methyltetrahydropteroyltri-L-glutamate contacts are provided by residues 16 to 19 (RELK) and lysine 112. L-homocysteine is bound by residues 433 to 435 (IGS) and glutamate 486. Residues 433-435 (IGS) and glutamate 486 contribute to the L-methionine site. 5-methyltetrahydropteroyltri-L-glutamate contacts are provided by residues 517-518 (RC) and tryptophan 563. Aspartate 601 contacts L-homocysteine. Aspartate 601 is a binding site for L-methionine. Glutamate 607 contributes to the 5-methyltetrahydropteroyltri-L-glutamate binding site. Positions 643, 645, and 667 each coordinate Zn(2+). Histidine 696 (proton donor) is an active-site residue. Cysteine 728 contributes to the Zn(2+) binding site.

It belongs to the vitamin-B12 independent methionine synthase family. It depends on Zn(2+) as a cofactor.

It carries out the reaction 5-methyltetrahydropteroyltri-L-glutamate + L-homocysteine = tetrahydropteroyltri-L-glutamate + L-methionine. It functions in the pathway amino-acid biosynthesis; L-methionine biosynthesis via de novo pathway; L-methionine from L-homocysteine (MetE route): step 1/1. Functionally, catalyzes the transfer of a methyl group from 5-methyltetrahydrofolate to homocysteine resulting in methionine formation. This is 5-methyltetrahydropteroyltriglutamate--homocysteine methyltransferase from Neisseria meningitidis serogroup C (strain 053442).